Reading from the N-terminus, the 380-residue chain is Cytochrome b (380 aa).

The next 4 helical transmembrane spans lie at 34-54 (FGSLLGICLVTQIITGLLLAA), 78-99 (WLIRNLHANGASLFFICIYLHI), 114-134 (WNIGVILLLTLMATAFVGYVL), and 179-199 (FFALHFLLPFVIAGLTLVHLT). 2 residues coordinate heme b: H84 and H98. Residues H183 and H197 each coordinate heme b. H202 contacts a ubiquinone. Helical transmembrane passes span 227 to 247 (IKDILGFALMLISLATLALFS), 289 to 309 (LGGVLALAASVLILFLIPLLH), 321 to 341 (LSQILFWILVTDLLILTWVGS), and 348 to 368 (FIIIGQLASFSYFMIILVLFP).

The protein belongs to the cytochrome b family. As to quaternary structure, the cytochrome bc1 complex contains 11 subunits: 3 respiratory subunits (MT-CYB, CYC1 and UQCRFS1), 2 core proteins (UQCRC1 and UQCRC2) and 6 low-molecular weight proteins (UQCRH/QCR6, UQCRB/QCR7, UQCRQ/QCR8, UQCR10/QCR9, UQCR11/QCR10 and a cleavage product of UQCRFS1). This cytochrome bc1 complex then forms a dimer. Requires heme b as cofactor.

It localises to the mitochondrion inner membrane. Its function is as follows. Component of the ubiquinol-cytochrome c reductase complex (complex III or cytochrome b-c1 complex) that is part of the mitochondrial respiratory chain. The b-c1 complex mediates electron transfer from ubiquinol to cytochrome c. Contributes to the generation of a proton gradient across the mitochondrial membrane that is then used for ATP synthesis. In Paradisaea rubra (Red bird of paradise), this protein is Cytochrome b (MT-CYB).